We begin with the raw amino-acid sequence, 246 residues long: Acetoacetate decarboxylase (246 aa).

The active-site Schiff-base intermediate with acetoacetate is K116.

The protein belongs to the ADC family.

The catalysed reaction is acetoacetate + H(+) = acetone + CO2. Functionally, catalyzes the conversion of acetoacetate to acetone and carbon dioxide. This is Acetoacetate decarboxylase from Burkholderia mallei (strain NCTC 10247).